The following is a 65-amino-acid chain: Protein translocase subunit SecE (65 aa).

Over 1–27 (MEKLKEFLKGVRDELKRVVWPSRELVV) the chain is Cytoplasmic. A helical membrane pass occupies residues 28 to 59 (KATISVIIFSLAIGVYLWILDLTFTKIISFIL). At 60–65 (SLRGSL) the chain is on the periplasmic side.

It belongs to the SecE/SEC61-gamma family. Component of the Sec protein translocase complex. Heterotrimer consisting of SecY, SecE and SecG subunits. The heterotrimers can form oligomers, although 1 heterotrimer is thought to be able to translocate proteins. Interacts with SecDF, and other proteins may be involved. The channel interacts with SecA via subunit SecY.

The protein localises to the cell inner membrane. Functionally, essential subunit of the protein translocation channel SecYEG. Clamps together the 2 halves of SecY. May contact the channel plug during translocation. The sequence is that of Protein translocase subunit SecE from Aquifex aeolicus (strain VF5).